A 152-amino-acid chain; its full sequence is 6,7-dimethyl-8-ribityllumazine synthase (152 aa).

Residues Phe-22, 56–58 (AFE), and 79–81 (AVI) contribute to the 5-amino-6-(D-ribitylamino)uracil site. 84-85 (AT) is a (2S)-2-hydroxy-3-oxobutyl phosphate binding site. His-87 functions as the Proton donor in the catalytic mechanism. A 5-amino-6-(D-ribitylamino)uracil-binding site is contributed by Phe-112. Arg-126 is a (2S)-2-hydroxy-3-oxobutyl phosphate binding site.

The protein belongs to the DMRL synthase family.

It catalyses the reaction (2S)-2-hydroxy-3-oxobutyl phosphate + 5-amino-6-(D-ribitylamino)uracil = 6,7-dimethyl-8-(1-D-ribityl)lumazine + phosphate + 2 H2O + H(+). The protein operates within cofactor biosynthesis; riboflavin biosynthesis; riboflavin from 2-hydroxy-3-oxobutyl phosphate and 5-amino-6-(D-ribitylamino)uracil: step 1/2. Functionally, catalyzes the formation of 6,7-dimethyl-8-ribityllumazine by condensation of 5-amino-6-(D-ribitylamino)uracil with 3,4-dihydroxy-2-butanone 4-phosphate. This is the penultimate step in the biosynthesis of riboflavin. The protein is 6,7-dimethyl-8-ribityllumazine synthase of Carboxydothermus hydrogenoformans (strain ATCC BAA-161 / DSM 6008 / Z-2901).